Here is a 451-residue protein sequence, read N- to C-terminus: Probable D-serine dehydratase (451 aa).

N6-(pyridoxal phosphate)lysine is present on Lys-119.

Belongs to the serine/threonine dehydratase family. DsdA subfamily. Requires pyridoxal 5'-phosphate as cofactor.

The catalysed reaction is D-serine = pyruvate + NH4(+). The polypeptide is Probable D-serine dehydratase (Acidovorax sp. (strain JS42)).